The primary structure comprises 245 residues: 2,3-bisphosphoglycerate-dependent phosphoglycerate mutase (245 aa).

Substrate contacts are provided by residues 8–15 (RHGQSLWN), 21–22 (TG), R60, 87–90 (ERHY), K98, 114–115 (RR), and 183–184 (GN). H9 (tele-phosphohistidine intermediate) is an active-site residue. Residue E87 is the Proton donor/acceptor of the active site.

This sequence belongs to the phosphoglycerate mutase family. BPG-dependent PGAM subfamily.

It catalyses the reaction (2R)-2-phosphoglycerate = (2R)-3-phosphoglycerate. Its pathway is carbohydrate degradation; glycolysis; pyruvate from D-glyceraldehyde 3-phosphate: step 3/5. Catalyzes the interconversion of 2-phosphoglycerate and 3-phosphoglycerate. The polypeptide is 2,3-bisphosphoglycerate-dependent phosphoglycerate mutase (Bacillus cereus (strain ZK / E33L)).